The chain runs to 297 residues: PsbP domain-containing protein 5, chloroplastic (297 aa).

This sequence belongs to the PsbP family.

It localises to the plastid. Its subcellular location is the chloroplast thylakoid lumen. In terms of biological role, involved in strigolactone biosynthesis. This chain is PsbP domain-containing protein 5, chloroplastic (PPD5), found in Arabidopsis thaliana (Mouse-ear cress).